Consider the following 537-residue polypeptide: MAKLIAFDQDAREGILRGVDALANTVKVTLGPRGRNVVLDKAFGGPLVTNDGVTIARDIDVEDPFENLGAQLVKSVAVKTNDIAGDGTTTATLLAQALIAEGLRNVAAGANPIELNKGIEAATQKTLDELRARATPISAPQEVASVATVSSRDEVVGKIVAEAMEKVGKDGVVTVEESQSLETTLDITEGISFDKGYLSPYFINDTDTQTAVLENPAILLVRNKISSLPDFLPLLEKIVESNRPVLIIAEDIEGEPLQTLVVNSIRKTIKAVAVKSPYFGDRRKAFMDDLAVVTNATVVDPEVGINLSEAGVEVLGTARRVTVSKDETILVDGAGDAEAVEARRQQIRREIETTDSTWDREKAEERLAKLSGGVAVIRVGAATETEVNERKLRVEDAINAARAAAQEGIIAGGGSALVQIAETLKAYAEEFEGDQKVGIRALAAALSKPAYWIAANAGLDGAVIVARIADLPNNEGFNAATLEYGNLVDQGVIDPVKVTHSAVVNASSVARMVLTTEASIVDKPAEETADHGHGHHH.

Residues 29 to 32 (TLGP), 86 to 90 (DGTTT), Gly413, 478 to 480 (NAA), and Asp494 contribute to the ATP site.

Belongs to the chaperonin (HSP60) family. Forms a cylinder of 14 subunits composed of two heptameric rings stacked back-to-back. Interacts with the co-chaperonin GroES.

The protein localises to the cytoplasm. It carries out the reaction ATP + H2O + a folded polypeptide = ADP + phosphate + an unfolded polypeptide.. Functionally, together with its co-chaperonin GroES, plays an essential role in assisting protein folding. The GroEL-GroES system forms a nano-cage that allows encapsulation of the non-native substrate proteins and provides a physical environment optimized to promote and accelerate protein folding. This is Chaperonin GroEL 1 from Corynebacterium efficiens (strain DSM 44549 / YS-314 / AJ 12310 / JCM 11189 / NBRC 100395).